A 338-amino-acid chain; its full sequence is Cytochrome P450 monooxygenase easK (338 aa).

Positions 1–16 are cleaved as a signal peptide; it reads MLLLTFTLPVVTLLLA. Residues Asn-240 and Asn-327 are each glycosylated (N-linked (GlcNAc...) asparagine).

This sequence belongs to the cytochrome P450 family. It depends on heme as a cofactor.

The protein operates within alkaloid biosynthesis; ergot alkaloid biosynthesis. Functionally, cytochrome P450 monooxygenase; part of the gene cluster that mediates the biosynthesis of fumiclavanine C, a fungal ergot alkaloid. DmaW catalyzes the first step of ergot alkaloid biosynthesis by condensing dimethylallyl diphosphate (DMAP) and tryptophan to form 4-dimethylallyl-L-tryptophan. The second step is catalyzed by the methyltransferase easF that methylates 4-dimethylallyl-L-tryptophan in the presence of S-adenosyl-L-methionine, resulting in the formation of 4-dimethylallyl-L-abrine. The catalase easC and the FAD-dependent oxidoreductase easE then transform 4-dimethylallyl-L-abrine to chanoclavine-I which is further oxidized by EasD in the presence of NAD(+), resulting in the formation of chanoclavine-I aldehyde. EasA reduces chanoclavine-I aldehyde to dihydrochanoclavine-I aldehyde that spontaneously dehydrates to form 6,8-dimethyl-6,7-didehydroergoline. EasG then catalyzes the reduction of 6,8-dimethyl-6,7-didehydroergoline to form festuclavine. Hydrolysis of festuclavine by easM then leads to the formation of fumigaclavine B which is in turn acetylated by easN to fumigaclavine A. Finally, easL catalyzes the conversion of fumigaclavine A into fumigaclavine C by attaching a dimethylallyl moiety to C-2 of the indole nucleus. The role of the cytochrome P450 monooxygenase easK within the cluster has not been identified yet. The chain is Cytochrome P450 monooxygenase easK from Aspergillus fumigatus (strain ATCC MYA-4609 / CBS 101355 / FGSC A1100 / Af293) (Neosartorya fumigata).